Here is a 167-residue protein sequence, read N- to C-terminus: Mannose-specific lectin (167 aa).

The first 24 residues, 1 to 24 (MAFSISSTMIFLLSLALFSTLVSA), serve as a signal peptide directing secretion. The Bulb-type lectin domain occupies 25–138 (DNHLLPGERL…PIFATGTNRF (114 aa)). A disulfide bond links cysteine 53 and cysteine 76.

Homotetramer. Expressed in the pseudobulb, with highest levels of expression in the non-swollen internode (at protein level).

The protein resides in the secreted. Functionally, mannose-specific lectin. Shows agglutinating activity towards chicken erythrocytes. Has antifungal activity against A.alternata and Collectotrichum species. The polypeptide is Mannose-specific lectin (Dendrobium findlayanum (Findlay's orchid)).